Consider the following 154-residue polypeptide: Methylglyoxal synthase (154 aa).

The 149-residue stretch at 6–154 (GALPSRKQIA…AYIAERTKKL (149 aa)) folds into the MGS-like domain. Substrate-binding positions include histidine 19, lysine 23, 45 to 48 (TGTT), and 65 to 66 (SG). Aspartate 71 serves as the catalytic Proton donor/acceptor. Residue histidine 98 participates in substrate binding.

It belongs to the methylglyoxal synthase family.

The enzyme catalyses dihydroxyacetone phosphate = methylglyoxal + phosphate. Its function is as follows. Catalyzes the formation of methylglyoxal from dihydroxyacetone phosphate. The polypeptide is Methylglyoxal synthase (Saccharophagus degradans (strain 2-40 / ATCC 43961 / DSM 17024)).